The sequence spans 424 residues: Histidine--tRNA ligase (424 aa).

The segment at 1 to 22 (MSYRRPKGTYDVYPGDAARQEP) is disordered.

Belongs to the class-II aminoacyl-tRNA synthetase family. As to quaternary structure, homodimer.

It is found in the cytoplasm. It catalyses the reaction tRNA(His) + L-histidine + ATP = L-histidyl-tRNA(His) + AMP + diphosphate + H(+). This is Histidine--tRNA ligase from Rubrobacter xylanophilus (strain DSM 9941 / JCM 11954 / NBRC 16129 / PRD-1).